The chain runs to 261 residues: Transcription repressor OFP15 (261 aa).

Residues 1–28 (MKLPFLNKNHSTSSYSSNSSSSSWPWPS) form a disordered region. Low complexity predominate over residues 11-28 (STSSYSSNSSSSSWPWPS). The OVATE domain occupies 112–172 (FSLESDDPYS…FAAFVDLLMN (61 aa)).

In terms of assembly, interacts with BLH1 and BLH3. As to expression, expressed in roots, cauline leaves, shoots, flower buds and siliques.

The protein localises to the nucleus. Its function is as follows. Transcriptional repressor that regulates multiple aspects of plant growth and development through the regulation of BEL1-LIKE (BLH) and KNOX TALE (KNAT) homeodomain transcription factors. This chain is Transcription repressor OFP15 (OFP15), found in Arabidopsis thaliana (Mouse-ear cress).